A 506-amino-acid polypeptide reads, in one-letter code: RNA-splicing ligase RtcB homolog (506 aa).

Residues Asp120, Cys123, His228, His260, and His354 each coordinate Mn(2+). 227–231 (NHYAE) contacts GMP. Residues 354–355 (HN), 403–406 (GGSM), Ser410, 429–432 (HGAG), and Lys505 contribute to the GMP site. His429 serves as the catalytic GMP-histidine intermediate.

Belongs to the RtcB family. In terms of assembly, catalytic component of the tRNA-splicing ligase complex. It depends on Mn(2+) as a cofactor.

The enzyme catalyses a 3'-end 3'-phospho-ribonucleotide-RNA + a 5'-end dephospho-ribonucleoside-RNA + GTP = a ribonucleotidyl-ribonucleotide-RNA + GMP + diphosphate. The catalysed reaction is a 3'-end 2',3'-cyclophospho-ribonucleotide-RNA + a 5'-end dephospho-ribonucleoside-RNA + GTP + H2O = a ribonucleotidyl-ribonucleotide-RNA + GMP + diphosphate + H(+). Catalytic subunit of the tRNA-splicing ligase complex that acts by directly joining spliced tRNA halves to mature-sized tRNAs by incorporating the precursor-derived splice junction phosphate into the mature tRNA as a canonical 3',5'-phosphodiester. May act as an RNA ligase with broad substrate specificity, and may function toward other RNAs. This chain is RNA-splicing ligase RtcB homolog, found in Anopheles gambiae (African malaria mosquito).